The chain runs to 427 residues: Glutamate-1-semialdehyde 2,1-aminomutase (427 aa).

Lys-265 is subject to N6-(pyridoxal phosphate)lysine.

This sequence belongs to the class-III pyridoxal-phosphate-dependent aminotransferase family. HemL subfamily. Homodimer. Pyridoxal 5'-phosphate is required as a cofactor.

The protein localises to the cytoplasm. The enzyme catalyses (S)-4-amino-5-oxopentanoate = 5-aminolevulinate. The protein operates within porphyrin-containing compound metabolism; protoporphyrin-IX biosynthesis; 5-aminolevulinate from L-glutamyl-tRNA(Glu): step 2/2. This is Glutamate-1-semialdehyde 2,1-aminomutase from Idiomarina loihiensis (strain ATCC BAA-735 / DSM 15497 / L2-TR).